The primary structure comprises 245 residues: uncharacterized protein (245 aa).

This is an uncharacterized protein from Frog virus 3 (isolate Goorha) (FV-3).